The sequence spans 22 residues: Pectinesterase (22 aa).

Asp6 functions as the Proton donor in the catalytic mechanism. Arg19 and Trp21 together coordinate substrate.

The protein belongs to the pectinesterase family.

It is found in the secreted. Its subcellular location is the cell wall. The enzyme catalyses [(1-&gt;4)-alpha-D-galacturonosyl methyl ester](n) + n H2O = [(1-&gt;4)-alpha-D-galacturonosyl](n) + n methanol + n H(+). The protein operates within glycan metabolism; pectin degradation; 2-dehydro-3-deoxy-D-gluconate from pectin: step 1/5. In Capsicum chinense (Scotch bonnet), this protein is Pectinesterase.